The chain runs to 389 residues: Heat-inducible transcription repressor HrcA (389 aa).

This sequence belongs to the HrcA family.

In terms of biological role, negative regulator of class I heat shock genes (grpE-dnaK-dnaJ and groELS operons). Prevents heat-shock induction of these operons. The polypeptide is Heat-inducible transcription repressor HrcA (Synechococcus sp. (strain JA-2-3B'a(2-13)) (Cyanobacteria bacterium Yellowstone B-Prime)).